The following is a 309-amino-acid chain: Transcriptional regulator HilD (309 aa).

Residues 209-306 form the HTH araC/xylS-type domain; sequence ERVYNIISSS…KTTPSTFIKM (98 aa). 2 DNA-binding regions (H-T-H motif) span residues 226–247 and 273–296; these read TDVA…AEEG and VNAV…KKYF.

The protein is Transcriptional regulator HilD (hilD) of Salmonella typhimurium (strain SL1344).